Here is an 833-residue protein sequence, read N- to C-terminus: Leucine--tRNA ligase (833 aa).

Residues 41 to 52 (PYPSGAGLHVGH) carry the 'HIGH' region motif. The short motif at 610–614 (KMSKS) is the 'KMSKS' region element. ATP is bound at residue Lys-613.

This sequence belongs to the class-I aminoacyl-tRNA synthetase family.

It is found in the cytoplasm. The enzyme catalyses tRNA(Leu) + L-leucine + ATP = L-leucyl-tRNA(Leu) + AMP + diphosphate. The polypeptide is Leucine--tRNA ligase (Streptococcus uberis (strain ATCC BAA-854 / 0140J)).